A 191-amino-acid polypeptide reads, in one-letter code: A-type ATP synthase subunit E (191 aa).

This sequence belongs to the V-ATPase E subunit family. In terms of assembly, has multiple subunits with at least A(3), B(3), C, D, E, F, H, I and proteolipid K(x). In terms of processing, the N-terminus is blocked.

It is found in the cell membrane. Component of the A-type ATP synthase that produces ATP from ADP in the presence of a proton gradient across the membrane. The chain is A-type ATP synthase subunit E from Sulfurisphaera tokodaii (strain DSM 16993 / JCM 10545 / NBRC 100140 / 7) (Sulfolobus tokodaii).